Here is a 271-residue protein sequence, read N- to C-terminus: MASSSSNRSFLHRNANTFLTYPHCPENPEIISQKLWDLVARWNPLYIVCAREAHRDGNMHLHALLQTDKPVRTTDARIFDIEGFHPNIQSAKSVNKVRDYILKEPLAVFERGTFIPRKSCFQGNTPPFPKKNPNKDEIMAHIISHATSKQEYLCLVRKEFPYDWATKLQYFEYSANKLFPDIQEEFISPHPPSSPDLLCNESIKDWLQPNIYQVSPEAYMLLQPTCYTVDEAISDLTWMDNLSSQQMKDQESRASTSSVQQGQGNLLGPEV.

The region spanning 11-114 (LHRNANTFLT…PLAVFERGTF (104 aa)) is the CRESS-DNA virus Rep endonuclease domain. The short motif at 18-21 (FLTY) is the RCR-1 element. Residues E52, H60, and H62 each contribute to the a divalent metal cation site. The short motif at 60–62 (HLH) is the RCR-2 element. Y100 (for DNA cleavage activity) is an active-site residue. The RCR-3 motif lies at 100–103 (YILK). E104 is a binding site for a divalent metal cation. Residues 174–186 (SANKLFPDIQEEF) are oligomerization. A binding to RBR1 region spans residues 197-201 (LLCNE). Residues 220-229 (MLLQPTCYTV) form a transactivation region. Residues 244–264 (SQQMKDQESRASTSSVQQGQG) show a composition bias toward polar residues. The segment at 244–271 (SQQMKDQESRASTSSVQQGQGNLLGPEV) is disordered.

Belongs to the geminiviridae Rep protein family. As to quaternary structure, homooligomer. Interacts with host retinoblastoma-related protein 1 (RBR1), and may thereby deregulate the host cell cycle. Part of the C- and V-complexes which are RepA-Rep-DNA complexes involved in the c-sense and v-sense transcription. It depends on Mg(2+) as a cofactor. The cofactor is Mn(2+).

Its subcellular location is the host nucleus. The protein localises to the host cytoplasm. Its function is as follows. Implicated in enhancement of V-sense gene expression. Acts a an inhibitor of C-sense gene transcription. The chain is Replication-associated protein A from Avena sativa (Oat).